Here is a 246-residue protein sequence, read N- to C-terminus: Proteasome subunit alpha type-6 (246 aa).

This sequence belongs to the peptidase T1A family. As to quaternary structure, the 26S proteasome consists of a 20S proteasome core and two 19S regulatory subunits. The 20S proteasome core is composed of 28 subunits that are arranged in four stacked rings, resulting in a barrel-shaped structure. The two end rings are each formed by seven alpha subunits, and the two central rings are each formed by seven beta subunits. The catalytic chamber with the active sites is on the inside of the barrel.

Its subcellular location is the cytoplasm. It is found in the nucleus. Its function is as follows. The proteasome is a multicatalytic proteinase complex which is characterized by its ability to cleave peptides with Arg, Phe, Tyr, Leu, and Glu adjacent to the leaving group at neutral or slightly basic pH. The proteasome has an ATP-dependent proteolytic activity. The polypeptide is Proteasome subunit alpha type-6 (PAA1) (Oryza sativa subsp. japonica (Rice)).